Reading from the N-terminus, the 541-residue chain is Solute carrier family 22 member 10 (541 aa).

Residues 1–15 (MAFEELLSQVGGLGR) lie on the Cytoplasmic side of the membrane. Residues 16-36 (FQMLHLVFILPSLMLLIPHIL) traverse the membrane as a helical segment. Residues 37–145 (LENFAAAIPG…DLVCDYQSLK (109 aa)) lie on the Extracellular side of the membrane. Residues N56 and N102 are each glycosylated (N-linked (GlcNAc...) asparagine). Residues 146–166 (SVVQFLLLTGMLVGGIIGGHV) traverse the membrane as a helical segment. Over 167–193 (SDRFGRRFILRWCLLQLAITDTCAAFA) the chain is Cytoplasmic. The chain crosses the membrane as a helical span at residues 194 to 214 (PTFPVYCVLRFLAGFSSMIII). Residues 215 to 230 (SNNSLPITEWIRPNSK) are Extracellular-facing. Residues 231–251 (ALVVILSSGALSIGQIILGGL) form a helical membrane-spanning segment. At 252-259 (AYVFRDWQ) the chain is on the cytoplasmic side. Residues 260 to 280 (TLHVVASVPFFVFFLLSRWLV) traverse the membrane as a helical segment. Residues 281–349 (ESARWLIITN…LFRNPSMRKR (69 aa)) are Extracellular-facing. Residues 350–370 (ICILVFLRFANTIPFYGTMVN) traverse the membrane as a helical segment. The Cytoplasmic segment spans residues 371-377 (LQHVGSN). Residues 378–398 (IFLLQVLYGAVALIVRCLALL) form a helical membrane-spanning segment. The Extracellular portion of the chain corresponds to 399–406 (TLNHMGRR). The chain crosses the membrane as a helical span at residues 407 to 427 (ISQILFMFLVGLSILANTFVP). Residues 428–436 (KEMQTLRVA) are Cytoplasmic-facing. A helical membrane pass occupies residues 437–457 (LACLGIGCSAATFSSVAVHFI). Residues 458 to 472 (ELIPTVLRARASGID) lie on the Extracellular side of the membrane. The chain crosses the membrane as a helical span at residues 473–493 (LTASRIGAALAPLLMTLTVFF). The Cytoplasmic portion of the chain corresponds to 494 to 495 (TT). The chain crosses the membrane as a helical span at residues 496–516 (LPWIIYGIFPIIGGLIVFLLP). Over 517 to 541 (ETKNLPLPDTIKDVENQKKNLKEKA) the chain is Extracellular.

The protein belongs to the major facilitator (TC 2.A.1) superfamily. Organic cation transporter (TC 2.A.1.19) family. Detected in fetal and adult liver, and in adult kidney.

The protein resides in the membrane. This Homo sapiens (Human) protein is Solute carrier family 22 member 10 (SLC22A10).